We begin with the raw amino-acid sequence, 396 residues long: Smad nuclear-interacting protein 1 (396 aa).

Residues 1-10 (MKAVKSERER) are compositionally biased toward basic and acidic residues. A disordered region spans residues 1 to 227 (MKAVKSERER…VPAKEKPSFE (227 aa)). Lys-30 is covalently cross-linked (Glycyl lysine isopeptide (Lys-Gly) (interchain with G-Cter in SUMO); alternate). A Glycyl lysine isopeptide (Lys-Gly) (interchain with G-Cter in SUMO1); alternate cross-link involves residue Lys-30. Lys-30 is covalently cross-linked (Glycyl lysine isopeptide (Lys-Gly) (interchain with G-Cter in SUMO2); alternate). 4 positions are modified to phosphoserine: Ser-35, Ser-49, Ser-52, and Ser-54. The residue at position 57 (Thr-57) is a Phosphothreonine. Phosphoserine is present on residues Ser-58 and Ser-99. Positions 77–105 (PPKKKNKASGRRSKSPRSKRNRSPHHSTV) are enriched in basic residues. Basic and acidic residues predominate over residues 107–142 (VKQEREDHPRRGREDRQHREPSEQEHRRARNSDRDR). A Glycyl lysine isopeptide (Lys-Gly) (interchain with G-Cter in SUMO2) cross-link involves residue Lys-108. A Phosphoserine modification is found at Ser-153. Positions 165–196 (RDRDTQNLQAQEEEREFYNARRREHRQRNDVG) form a coiled coil. Position 202 is a phosphoserine (Ser-202). The span at 213-225 (NKEKEVPAKEKPS) shows a compositional bias: basic and acidic residues. Lys-223 is covalently cross-linked (Glycyl lysine isopeptide (Lys-Gly) (interchain with G-Cter in SUMO2)). One can recognise an FHA domain in the interval 281 to 344 (YLLGRHRRIA…NGTFLNNKRI (64 aa)). The segment covering 373 to 382 (SSDTSEIDRK) has biased composition (basic and acidic residues). Residues 373–396 (SSDTSEIDRKDDEDEEEEEEVSDS) form a disordered region. Residues 383–396 (DDEDEEEEEEVSDS) show a composition bias toward acidic residues. Phosphoserine is present on Ser-394.

In terms of assembly, component of activated spliceosome complexes. Component of the minor spliceosome, which splices U12-type introns. Binds SMAD4 and CREBBP/EP300. Binds the SMAD1/OAZ1/PSMB4 complex. Interacts with DROSHA and SMARCA4. Component of the SNARP complex which consists at least of SNIP1, SNW1, THRAP3, BCLAF1 and PNN. Degraded by the proteasome upon binding to the SMAD1/OAZ1/PSMB4 complex. In terms of tissue distribution, ubiquitous, with highest expression in heart and skeletal muscle.

The protein localises to the nucleus. Functionally, required for pre-mRNA splicing as component of the spliceosome. As a component of the minor spliceosome, involved in the splicing of U12-type introns in pre-mRNAs. Down-regulates NF-kappa-B signaling by competing with RELA for CREBBP/EP300 binding. Involved in the microRNA (miRNA) biogenesis. May be involved in cyclin-D1/CCND1 mRNA stability through the SNARP complex which associates with both the 3'end of the CCND1 gene and its mRNA. The polypeptide is Smad nuclear-interacting protein 1 (SNIP1) (Homo sapiens (Human)).